The primary structure comprises 255 residues: Acetylglutamate kinase (255 aa).

Substrate contacts are provided by residues 40–41, Arg-62, and Asn-153; that span reads GG.

The protein belongs to the acetylglutamate kinase family. ArgB subfamily.

Its subcellular location is the cytoplasm. It carries out the reaction N-acetyl-L-glutamate + ATP = N-acetyl-L-glutamyl 5-phosphate + ADP. It participates in amino-acid biosynthesis; L-arginine biosynthesis; N(2)-acetyl-L-ornithine from L-glutamate: step 2/4. Its function is as follows. Catalyzes the ATP-dependent phosphorylation of N-acetyl-L-glutamate. This Bacillus cereus (strain B4264) protein is Acetylglutamate kinase.